The chain runs to 113 residues: Histone H3-8 (113 aa).

The span at 1 to 17 (NTGAKAPRKHLANKAAR) shows a compositional bias: basic residues. The segment at 1–31 (NTGAKAPRKHLANKAARKTAAPANAGIKKPH) is disordered.

It belongs to the histone H3 family. In terms of assembly, the nucleosome is a histone octamer containing two molecules each of H2A, H2B, H3 and H4 assembled in one H3-H4 heterotetramer and two H2A-H2B heterodimers. The octamer wraps approximately 147 bp of DNA.

The protein resides in the nucleus. The protein localises to the chromosome. Functionally, core component of nucleosome. Nucleosomes wrap and compact DNA into chromatin, limiting DNA accessibility to the cellular machineries which require DNA as a template. Histones thereby play a central role in transcription regulation, DNA repair, DNA replication and chromosomal stability. DNA accessibility is regulated via a complex set of post-translational modifications of histones, also called histone code, and nucleosome remodeling. The sequence is that of Histone H3-8 (H3-8) from Stylonychia lemnae (Ciliate).